A 287-amino-acid polypeptide reads, in one-letter code: F-actin-capping protein subunit beta (287 aa).

Serine 2 is modified (N-acetylserine). Phosphoserine is present on residues serine 85 and serine 92.

This sequence belongs to the F-actin-capping protein beta subunit family. Component of the F-actin capping complex, composed of a heterodimer of an alpha and a beta subunit. Interacts with BSP1 (via C-terminus); leading to recruitment of the F-actin capping complex to actin cortical patches and the acomyosin contractile ring.

The protein resides in the cytoplasm. It is found in the cytoskeleton. The protein localises to the actin patch. Its subcellular location is the bud. It localises to the bud tip. Functionally, F-actin-capping proteins bind in a Ca(2+)-independent manner to the fast growing ends of actin filaments (barbed end) thereby blocking the exchange of subunits at these ends. Unlike other capping proteins (such as gelsolin and severin), these proteins do not sever actin filaments. This Saccharomyces cerevisiae (strain ATCC 204508 / S288c) (Baker's yeast) protein is F-actin-capping protein subunit beta (CAP2).